Consider the following 351-residue polypeptide: High-affinity nickel transport protein (351 aa).

Topologically, residues 1–19 are cytoplasmic; sequence MFQLLAGVRMNSTGRPRAK. Residues 20-40 form a helical membrane-spanning segment; it reads IILLYALLIAFNIGAWLCALA. Topologically, residues 41-51 are periplasmic; sequence AFRDHPVLLGT. The helical transmembrane segment at 52 to 72 threads the bilayer; the sequence is ALLAYGLGLRHAVDADHLAAI. Residues 73-94 lie on the Cytoplasmic side of the membrane; it reads DNVTRKLMQDGRRPITAGLWFS. Residues 95–115 form a helical membrane-spanning segment; it reads LGHSSVVVLASVLIAVMATTL. The Periplasmic segment spans residues 116–128; that stretch reads QERLDAFHEVGSV. The chain crosses the membrane as a helical span at residues 129–149; sequence IGTLASALFLFAIAAINLVIL. At 150–199 the chain is on the cytoplasmic side; sequence RSAYRAFRRVRRGGIYVEEDFDLLFGNRGFLARIFRPLFRFITRSWHMYP. A helical transmembrane segment spans residues 200 to 220; it reads LGMLFALGFDTATEVALLGIS. The Periplasmic portion of the chain corresponds to 221–243; it reads TMEASRGVPIWSILVFPALFTAG. The helical transmembrane segment at 244–264 threads the bilayer; it reads MALIDTIDSILMCGAYAWAYA. The Cytoplasmic segment spans residues 265 to 269; the sequence is KPVRK. The helical transmembrane segment at 270–290 threads the bilayer; it reads LYYNMTITFVSAIVALIVGGI. Over 291-316 the chain is Periplasmic; sequence ETLGLLADKFMLKGVFWNAVGALNEN. A helical membrane pass occupies residues 317 to 337; it reads FCQLGFVIIGIFTVCWVVSIV. At 338–351 the chain is on the cytoplasmic side; that stretch reads VYRLRRYDDSEVRA.

It belongs to the NiCoT transporter (TC 2.A.52) family.

The protein localises to the cell inner membrane. High-affinity nickel transporter responsible for nickel uptake. Necessary for high levels of activity of hydrogenase and urease. Does not transport cobalt. This Cupriavidus necator (strain ATCC 17699 / DSM 428 / KCTC 22496 / NCIMB 10442 / H16 / Stanier 337) (Ralstonia eutropha) protein is High-affinity nickel transport protein (hoxN).